The following is a 236-amino-acid chain: tRNA (guanine-N(1)-)-methyltransferase (236 aa).

S-adenosyl-L-methionine contacts are provided by residues G110 and 129–134; that span reads LGDFVL.

The protein belongs to the RNA methyltransferase TrmD family. Homodimer.

It localises to the cytoplasm. The catalysed reaction is guanosine(37) in tRNA + S-adenosyl-L-methionine = N(1)-methylguanosine(37) in tRNA + S-adenosyl-L-homocysteine + H(+). Specifically methylates guanosine-37 in various tRNAs. The polypeptide is tRNA (guanine-N(1)-)-methyltransferase (Clostridium perfringens (strain SM101 / Type A)).